The sequence spans 175 residues: Protein FLOWERING LOCUS T (175 aa).

This sequence belongs to the phosphatidylethanolamine-binding protein family. Interacts with FD/BZIP14 and FDP/BZIP27. Interacts with FTIP1/MCTP1 in phloem companion cells. Interacts with NAKR1. In terms of tissue distribution, mostly localized in leaves vasculature.

It localises to the cytoplasm. The protein resides in the nucleus. Its subcellular location is the endoplasmic reticulum. Its function is as follows. Component of the mobile flower-promoting signal (floral stimulus or florigen). Promotes the transition from vegetative growth to flowering. Required for 'SEPALLATA3' (SEP3) and 'FRUITFULL' (FUL) accumulation in mature rosette leaves. Seems to acts in parallel with 'LEAFY' to induce flowering by regulating 'APETALA1'. Translated in leaves and then transported to the shoot apical meristem where it activates the transcription of several floral meristem identity genes. May play a role in both the autonomous and the long-day flowering pathways. The chain is Protein FLOWERING LOCUS T from Arabidopsis thaliana (Mouse-ear cress).